Here is a 171-residue protein sequence, read N- to C-terminus: Shikimate kinase (171 aa).

14–19 serves as a coordination point for ATP; sequence GAGKST. Mg(2+) is bound at residue Ser-18. 3 residues coordinate substrate: Asp-36, Arg-60, and Gly-82. Arg-120 lines the ATP pocket. Position 139 (Arg-139) interacts with substrate. Gln-156 is a binding site for ATP.

Belongs to the shikimate kinase family. Monomer. Mg(2+) is required as a cofactor.

The protein resides in the cytoplasm. The enzyme catalyses shikimate + ATP = 3-phosphoshikimate + ADP + H(+). The protein operates within metabolic intermediate biosynthesis; chorismate biosynthesis; chorismate from D-erythrose 4-phosphate and phosphoenolpyruvate: step 5/7. In terms of biological role, catalyzes the specific phosphorylation of the 3-hydroxyl group of shikimic acid using ATP as a cosubstrate. This is Shikimate kinase from Psychromonas ingrahamii (strain DSM 17664 / CCUG 51855 / 37).